The following is a 215-amino-acid chain: tRNA (guanine-N(7)-)-methyltransferase (215 aa).

Positions 44, 69, 96, and 118 each coordinate S-adenosyl-L-methionine. Residue Asp118 is part of the active site. Residues Lys122, Asp154, and Thr192–Glu195 contribute to the substrate site.

Belongs to the class I-like SAM-binding methyltransferase superfamily. TrmB family.

The enzyme catalyses guanosine(46) in tRNA + S-adenosyl-L-methionine = N(7)-methylguanosine(46) in tRNA + S-adenosyl-L-homocysteine. It participates in tRNA modification; N(7)-methylguanine-tRNA biosynthesis. Catalyzes the formation of N(7)-methylguanine at position 46 (m7G46) in tRNA. In Levilactobacillus brevis (strain ATCC 367 / BCRC 12310 / CIP 105137 / JCM 1170 / LMG 11437 / NCIMB 947 / NCTC 947) (Lactobacillus brevis), this protein is tRNA (guanine-N(7)-)-methyltransferase.